We begin with the raw amino-acid sequence, 594 residues long: UvrABC system protein C (594 aa).

The region spanning 13 to 99 (NSSGVYQYFD…IKQLKPKYNI (87 aa)) is the GIY-YIG domain. Residues 205–240 (DRLIKELELKMERLSSNLRFEEALIYRDRIAKIQKI) form the UVR domain.

The protein belongs to the UvrC family. As to quaternary structure, interacts with UvrB in an incision complex.

Its subcellular location is the cytoplasm. Functionally, the UvrABC repair system catalyzes the recognition and processing of DNA lesions. UvrC both incises the 5' and 3' sides of the lesion. The N-terminal half is responsible for the 3' incision and the C-terminal half is responsible for the 5' incision. This is UvrABC system protein C from Helicobacter pylori (strain G27).